A 239-amino-acid polypeptide reads, in one-letter code: Guanylate kinase (239 aa).

Residues 55–235 (GRIFVITGPS…TLAELQAILL (181 aa)) enclose the Guanylate kinase-like domain. 62–69 (GPSGVGKS) contacts ATP.

Belongs to the guanylate kinase family.

It is found in the cytoplasm. The enzyme catalyses GMP + ATP = GDP + ADP. Functionally, essential for recycling GMP and indirectly, cGMP. This Mycoplasma pneumoniae (strain ATCC 29342 / M129 / Subtype 1) (Mycoplasmoides pneumoniae) protein is Guanylate kinase (gmk).